The sequence spans 261 residues: 3-deoxy-manno-octulosonate cytidylyltransferase (261 aa).

It belongs to the KdsB family.

The protein localises to the cytoplasm. The catalysed reaction is 3-deoxy-alpha-D-manno-oct-2-ulosonate + CTP = CMP-3-deoxy-beta-D-manno-octulosonate + diphosphate. It participates in nucleotide-sugar biosynthesis; CMP-3-deoxy-D-manno-octulosonate biosynthesis; CMP-3-deoxy-D-manno-octulosonate from 3-deoxy-D-manno-octulosonate and CTP: step 1/1. The protein operates within bacterial outer membrane biogenesis; lipopolysaccharide biosynthesis. Activates KDO (a required 8-carbon sugar) for incorporation into bacterial lipopolysaccharide in Gram-negative bacteria. The protein is 3-deoxy-manno-octulosonate cytidylyltransferase of Marinobacter nauticus (strain ATCC 700491 / DSM 11845 / VT8) (Marinobacter aquaeolei).